The sequence spans 342 residues: Serine/threonine-protein kinase ISR1 (342 aa).

Residues 59-342 form the Protein kinase domain; sequence WRLTRVLGCG…SNARVAEHAF (284 aa). ATP-binding positions include 65-73 and K84; that span reads LGCGSVACV. The Proton acceptor role is filled by D190.

This sequence belongs to the protein kinase superfamily. Ser/Thr protein kinase family.

The enzyme catalyses L-seryl-[protein] + ATP = O-phospho-L-seryl-[protein] + ADP + H(+). It catalyses the reaction L-threonyl-[protein] + ATP = O-phospho-L-threonyl-[protein] + ADP + H(+). Functionally, probable serine/threonine protein kinase which may function redundantly with MPK1-independent branch of the PCK1 pathway. This chain is Serine/threonine-protein kinase ISR1 (ISR1), found in Eremothecium gossypii (strain ATCC 10895 / CBS 109.51 / FGSC 9923 / NRRL Y-1056) (Yeast).